The primary structure comprises 131 residues: Large ribosomal subunit protein bL12 (131 aa).

Belongs to the bacterial ribosomal protein bL12 family. Homodimer. Part of the ribosomal stalk of the 50S ribosomal subunit. Forms a multimeric L10(L12)X complex, where L10 forms an elongated spine to which 2 to 4 L12 dimers bind in a sequential fashion. Binds GTP-bound translation factors.

In terms of biological role, forms part of the ribosomal stalk which helps the ribosome interact with GTP-bound translation factors. Is thus essential for accurate translation. The sequence is that of Large ribosomal subunit protein bL12 from Prochlorococcus marinus (strain NATL1A).